Reading from the N-terminus, the 271-residue chain is GPN-loop GTPase 3 (271 aa).

13–18 (GAGKST) contacts GTP. The Gly-Pro-Asn (GPN)-loop; involved in dimer interface signature appears at 70-72 (GPN). Residue 173 to 176 (SKVD) coordinates GTP.

It belongs to the GPN-loop GTPase family. In terms of assembly, heterodimers with GPN1 or GPN2. Binds to RNA polymerase II (RNAPII).

Its function is as follows. Small GTPase required for proper nuclear import of RNA polymerase II and III (RNAPII and RNAPIII). May act at an RNAP assembly step prior to nuclear import. This chain is GPN-loop GTPase 3, found in Eremothecium gossypii (strain ATCC 10895 / CBS 109.51 / FGSC 9923 / NRRL Y-1056) (Yeast).